A 381-amino-acid chain; its full sequence is Queuine tRNA-ribosyltransferase (381 aa).

Asp-96 acts as the Proton acceptor in catalysis. Substrate contacts are provided by residues 96–100 (DSGGF), Asp-150, Gln-193, and Gly-220. Positions 251-257 (GVGSPDA) are RNA binding. Asp-270 acts as the Nucleophile in catalysis. The tract at residues 275–279 (TRIAR) is RNA binding; important for wobble base 34 recognition. Cys-308, Cys-310, Cys-313, and His-339 together coordinate Zn(2+).

It belongs to the queuine tRNA-ribosyltransferase family. As to quaternary structure, homodimer. Within each dimer, one monomer is responsible for RNA recognition and catalysis, while the other monomer binds to the replacement base PreQ1. The cofactor is Zn(2+).

It carries out the reaction 7-aminomethyl-7-carbaguanine + guanosine(34) in tRNA = 7-aminomethyl-7-carbaguanosine(34) in tRNA + guanine. The protein operates within tRNA modification; tRNA-queuosine biosynthesis. Catalyzes the base-exchange of a guanine (G) residue with the queuine precursor 7-aminomethyl-7-deazaguanine (PreQ1) at position 34 (anticodon wobble position) in tRNAs with GU(N) anticodons (tRNA-Asp, -Asn, -His and -Tyr). Catalysis occurs through a double-displacement mechanism. The nucleophile active site attacks the C1' of nucleotide 34 to detach the guanine base from the RNA, forming a covalent enzyme-RNA intermediate. The proton acceptor active site deprotonates the incoming PreQ1, allowing a nucleophilic attack on the C1' of the ribose to form the product. After dissociation, two additional enzymatic reactions on the tRNA convert PreQ1 to queuine (Q), resulting in the hypermodified nucleoside queuosine (7-(((4,5-cis-dihydroxy-2-cyclopenten-1-yl)amino)methyl)-7-deazaguanosine). The chain is Queuine tRNA-ribosyltransferase from Bacillus subtilis (strain 168).